Consider the following 369-residue polypeptide: 2-aminoethylphosphonate--pyruvate transaminase (369 aa).

Position 193 is an N6-(pyridoxal phosphate)lysine (K193).

This sequence belongs to the class-V pyridoxal-phosphate-dependent aminotransferase family. PhnW subfamily. In terms of assembly, homodimer. Requires pyridoxal 5'-phosphate as cofactor.

It catalyses the reaction (2-aminoethyl)phosphonate + pyruvate = phosphonoacetaldehyde + L-alanine. Functionally, involved in phosphonate degradation. The protein is 2-aminoethylphosphonate--pyruvate transaminase of Burkholderia pseudomallei (strain 668).